Reading from the N-terminus, the 66-residue chain is Large ribosomal subunit protein bL35 (66 aa).

The span at 1-28 (MPKMKTHRGSAKRFKRTGSGKLKRRHGF) shows a compositional bias: basic residues. Residues 1-50 (MPKMKTHRGSAKRFKRTGSGKLKRRHGFTSHMFANKSQKQKRKLRKSAMV) form a disordered region.

Belongs to the bacterial ribosomal protein bL35 family.

The sequence is that of Large ribosomal subunit protein bL35 from Listeria monocytogenes serotype 4a (strain HCC23).